The primary structure comprises 112 residues: Putative regulatory protein DP2861 (112 aa).

The protein belongs to the RemA family.

This Desulfotalea psychrophila (strain LSv54 / DSM 12343) protein is Putative regulatory protein DP2861.